Reading from the N-terminus, the 233-residue chain is Putative N-acetylmannosamine-6-phosphate 2-epimerase (233 aa).

It belongs to the NanE family.

The enzyme catalyses an N-acyl-D-glucosamine 6-phosphate = an N-acyl-D-mannosamine 6-phosphate. The protein operates within amino-sugar metabolism; N-acetylneuraminate degradation; D-fructose 6-phosphate from N-acetylneuraminate: step 3/5. Converts N-acetylmannosamine-6-phosphate (ManNAc-6-P) to N-acetylglucosamine-6-phosphate (GlcNAc-6-P). The polypeptide is Putative N-acetylmannosamine-6-phosphate 2-epimerase (Yersinia pestis bv. Antiqua (strain Antiqua)).